A 304-amino-acid chain; its full sequence is tRNA (guanine(9)-N1)-methyltransferase (304 aa).

2 stretches are compositionally biased toward basic and acidic residues: residues 1-26 (MENKDALDIGKDDTNTSEADVSKNET) and 42-72 (RQQEWDAGREKRAEMRREKKRLRKEERKRKI). The disordered stretch occupies residues 1–72 (MENKDALDIG…LRKEERKRKI (72 aa)). Residues 81 to 276 (QKKRIRLGKV…EVIPKRKGIL (196 aa)) enclose the SAM-dependent MTase TRM10-type domain. S-adenosyl-L-methionine is bound by residues leucine 183, glycine 203, 207–211 (DKNRY), cysteine 215, leucine 229, and 241–243 (KIL). Catalysis depends on aspartate 207, which acts as the Proton acceptor. Residues 282–304 (SFDVSEDTRSQSNQSDSELEKEN) are disordered. Serine 296 is modified (phosphoserine).

Belongs to the class IV-like SAM-binding methyltransferase superfamily. TRM10 family. Monomer.

It is found in the cytoplasm. The protein localises to the nucleus. The enzyme catalyses guanosine(9) in tRNA + S-adenosyl-L-methionine = N(1)-methylguanosine(9) in tRNA + S-adenosyl-L-homocysteine + H(+). Functionally, S-adenosyl-L-methionine-dependent guanine N(1)-methyltransferase that catalyzes the formation of N(1)-methylguanine at position 9 (m1G9) in cytoplasmic tRNA. This chain is tRNA (guanine(9)-N1)-methyltransferase, found in Schizosaccharomyces pombe (strain 972 / ATCC 24843) (Fission yeast).